Reading from the N-terminus, the 177-residue chain is Protein GrpE (177 aa).

Composition is skewed to basic and acidic residues over residues 1–19 and 29–41; these read MAKHKHEEHPEDVEVKETV and SPEKSELELANER. The segment at 1–41 is disordered; that stretch reads MAKHKHEEHPEDVEVKETVETAEQAESASPEKSELELANER.

Belongs to the GrpE family. As to quaternary structure, homodimer.

The protein localises to the cytoplasm. Functionally, participates actively in the response to hyperosmotic and heat shock by preventing the aggregation of stress-denatured proteins, in association with DnaK and GrpE. It is the nucleotide exchange factor for DnaK and may function as a thermosensor. Unfolded proteins bind initially to DnaJ; upon interaction with the DnaJ-bound protein, DnaK hydrolyzes its bound ATP, resulting in the formation of a stable complex. GrpE releases ADP from DnaK; ATP binding to DnaK triggers the release of the substrate protein, thus completing the reaction cycle. Several rounds of ATP-dependent interactions between DnaJ, DnaK and GrpE are required for fully efficient folding. This chain is Protein GrpE, found in Streptococcus gordonii (strain Challis / ATCC 35105 / BCRC 15272 / CH1 / DL1 / V288).